The sequence spans 129 residues: Large ribosomal subunit protein uL14m (129 aa).

This sequence belongs to the universal ribosomal protein uL14 family.

It localises to the mitochondrion. This is Large ribosomal subunit protein uL14m (RPL14) from Acanthamoeba castellanii (Amoeba).